A 223-amino-acid chain; its full sequence is Putative oxidoreductase MT1904 (223 aa).

4 to 28 is a binding site for NADP(+); the sequence is LVTGGDTDLGRTMAEGFRNDGHKVT. Ser-128 provides a ligand contact to substrate.

The protein belongs to the short-chain dehydrogenases/reductases (SDR) family.

This chain is Putative oxidoreductase MT1904, found in Mycobacterium tuberculosis (strain CDC 1551 / Oshkosh).